A 260-amino-acid polypeptide reads, in one-letter code: Small ribosomal subunit protein uS2 (260 aa).

Belongs to the universal ribosomal protein uS2 family.

This Mesorhizobium japonicum (strain LMG 29417 / CECT 9101 / MAFF 303099) (Mesorhizobium loti (strain MAFF 303099)) protein is Small ribosomal subunit protein uS2.